A 208-amino-acid polypeptide reads, in one-letter code: Small ribosomal subunit protein uS4 (208 aa).

Positions 98 to 161 constitute an S4 RNA-binding domain; the sequence is RRLDNTIYRL…RQSPIILEAQ (64 aa).

It belongs to the universal ribosomal protein uS4 family. As to quaternary structure, part of the 30S ribosomal subunit. Contacts protein S5. The interaction surface between S4 and S5 is involved in control of translational fidelity.

One of the primary rRNA binding proteins, it binds directly to 16S rRNA where it nucleates assembly of the body of the 30S subunit. Functionally, with S5 and S12 plays an important role in translational accuracy. The sequence is that of Small ribosomal subunit protein uS4 from Solidesulfovibrio magneticus (strain ATCC 700980 / DSM 13731 / RS-1) (Desulfovibrio magneticus).